Consider the following 408-residue polypeptide: uncharacterized protein (408 aa).

The a divalent metal cation site is built by Glu-35, Asp-61, and Asn-96.

This sequence belongs to the metallophosphoesterase superfamily. It depends on a divalent metal cation as a cofactor.

This is an uncharacterized protein from Bacillus subtilis (strain 168).